The primary structure comprises 256 residues: Imidazole glycerol phosphate synthase subunit HisF (256 aa).

Active-site residues include aspartate 12 and aspartate 131.

It belongs to the HisA/HisF family. As to quaternary structure, heterodimer of HisH and HisF.

The protein resides in the cytoplasm. It carries out the reaction 5-[(5-phospho-1-deoxy-D-ribulos-1-ylimino)methylamino]-1-(5-phospho-beta-D-ribosyl)imidazole-4-carboxamide + L-glutamine = D-erythro-1-(imidazol-4-yl)glycerol 3-phosphate + 5-amino-1-(5-phospho-beta-D-ribosyl)imidazole-4-carboxamide + L-glutamate + H(+). It functions in the pathway amino-acid biosynthesis; L-histidine biosynthesis; L-histidine from 5-phospho-alpha-D-ribose 1-diphosphate: step 5/9. IGPS catalyzes the conversion of PRFAR and glutamine to IGP, AICAR and glutamate. The HisF subunit catalyzes the cyclization activity that produces IGP and AICAR from PRFAR using the ammonia provided by the HisH subunit. The protein is Imidazole glycerol phosphate synthase subunit HisF of Thermobifida fusca (strain YX).